The chain runs to 411 residues: Exodeoxyribonuclease 7 large subunit (411 aa).

This sequence belongs to the XseA family. As to quaternary structure, heterooligomer composed of large and small subunits.

The protein localises to the cytoplasm. The catalysed reaction is Exonucleolytic cleavage in either 5'- to 3'- or 3'- to 5'-direction to yield nucleoside 5'-phosphates.. In terms of biological role, bidirectionally degrades single-stranded DNA into large acid-insoluble oligonucleotides, which are then degraded further into small acid-soluble oligonucleotides. In Mycobacterium sp. (strain KMS), this protein is Exodeoxyribonuclease 7 large subunit.